Reading from the N-terminus, the 449-residue chain is POU domain, class 3, transcription factor 1 (449 aa).

Disordered stretches follow at residues 1–22 (MATT…TGPL), 76–108 (GGGG…GGGG), 132–152 (AHHL…HQPQ), 184–251 (GLHH…PSSD), and 393–449 (KRMT…GSVQ). Gly residues-rich tracts occupy residues 11-20 (GPGGGAGGTG) and 93-108 (AGGG…GGGG). Residues 132-143 (AHHLGPAMSPSP) show a composition bias toward low complexity. The span at 188-197 (ALHEDGHEAQ) shows a compositional bias: basic and acidic residues. The span at 218–230 (AGGLHAAAAHLHP) shows a compositional bias: low complexity. The region spanning 245–319 (EDAPSSDDLE…LLNKWLEETD (75 aa)) is the POU-specific domain. Positions 337 to 396 (KRKKRTSIEVGVKGALESHFLKCPKPSAHEITGLADSLQLEKEVVRVWFCNRRQKEKRMT) form a DNA-binding region, homeobox. Residues 425–434 (PSAPPPPPPA) show a composition bias toward pro residues.

The protein belongs to the POU transcription factor family. Class-3 subfamily.

It is found in the nucleus. Transcription factor that binds to the octamer motif (5'-ATTTGCAT-3'). Acts as a transcriptional activator when binding cooperatively with SOX4, SOX11, or SOX12 to gene promoters. Acts as a transcriptional repressor of myelin-specific genes. In Mus musculus (Mouse), this protein is POU domain, class 3, transcription factor 1 (Pou3f1).